An 843-amino-acid chain; its full sequence is Lon protease (843 aa).

A compositionally biased stretch (basic and acidic residues) spans 1-16 (MRERKETAMSDKEKKG). The interval 1–22 (MRERKETAMSDKEKKGAGAGAQ) is disordered. Residues 42–236 (LPILPLRNSV…LVLELLNRKR (195 aa)) enclose the Lon N-terminal domain. 388–395 (GPPGVGKT) contributes to the ATP binding site. The Lon proteolytic domain maps to 627–808 (TEIAGVATGL…DEVLQAALEE (182 aa)). Residues serine 714 and lysine 757 contribute to the active site. The disordered stretch occupies residues 805-843 (ALEENPVGRKPPAAPEPEGEKKPGATPTPPAKKPDEIRV).

The protein belongs to the peptidase S16 family. As to quaternary structure, homohexamer. Organized in a ring with a central cavity.

It is found in the cytoplasm. The enzyme catalyses Hydrolysis of proteins in presence of ATP.. ATP-dependent serine protease that mediates the selective degradation of mutant and abnormal proteins as well as certain short-lived regulatory proteins. Required for cellular homeostasis and for survival from DNA damage and developmental changes induced by stress. Degrades polypeptides processively to yield small peptide fragments that are 5 to 10 amino acids long. Binds to DNA in a double-stranded, site-specific manner. This is Lon protease from Anaeromyxobacter dehalogenans (strain 2CP-C).